We begin with the raw amino-acid sequence, 168 residues long: Bcl2-associated agonist of cell death (168 aa).

Met-1 carries the N-acetylmethionine modification. A disordered region spans residues 1–105; it reads MFQIPEFEPS…RSRSAPPNLW (105 aa). The residue at position 25 (Ser-25) is a Phosphoserine. The segment covering 49–60 has biased composition (polar residues); the sequence is SHQQEQPTSSSH. Ser-75 and Ser-91 each carry phosphoserine. Residues Arg-94 and Arg-96 each carry the asymmetric dimethylarginine; by PRMT1 modification. Ser-97 carries the post-translational modification Phosphoserine. Ser-99 carries the phosphoserine; by PKA, PKB, PAK1, RPS6KA1, RPS6KB1 and PKC/PRKCQ modification. Ser-99 carries the post-translational modification Phosphoserine; by PKB/AKT1. The BH3 signature appears at 110–124; it reads YGRELRRMSDEFVDS. A phosphoserine mark is found at Ser-118 and Ser-134. The segment at 125–145 is disordered; sequence FKKGLPRPKSAGTATQMRQSS. The segment covering 136–145 has biased composition (polar residues); that stretch reads GTATQMRQSS. An Omega-N-methylarginine modification is found at Arg-161.

This sequence belongs to the Bcl-2 family. Forms heterodimers with the anti-apoptotic proteins, Bcl-X(L), Bcl-2 and Bcl-W. Also binds protein S100A10. The Ser-75/Ser-99 phosphorylated form binds 14-3-3 proteins. Interacts with AKT1 and PIM3. Interacts (via BH3 domain) with NOL3 (via CARD domain); preventing the association of BAD with BCL2. Interacts with HIF3A (via C-terminus domain); the interaction reduces the binding between BAD and BAX. Interacts with GIMAP3/IAN4 and GIMAP5/IAN5. Post-translationally, phosphorylated on one or more of Ser-75, Ser-99, Ser-118 and Ser-134 in response to survival stimuli, which blocks its pro-apoptotic activity. Phosphorylation on Ser-99 or Ser-75 promotes heterodimerization with 14-3-3 proteins. This interaction then facilitates the phosphorylation at Ser-118, a site within the BH3 motif, leading to the release of Bcl-X(L) and the promotion of cell survival. Ser-99 is the major site of AKT/PKB phosphorylation, Ser-118 the major site of protein kinase A (CAPK) phosphorylation. Phosphorylation at Ser-99 by PKB/AKT1 is almost completely blocked by the apoptotic C-terminus cleavage product of PKN2 generated by caspases-3 activity during apoptosis. Methylation at Arg-94 and Arg-96 by PRMT1 inhibits Akt-mediated phosphorylation at Ser-99. As to expression, expressed in a wide variety of tissues.

Its subcellular location is the mitochondrion outer membrane. The protein localises to the cytoplasm. Its function is as follows. Promotes cell death. Successfully competes for the binding to Bcl-X(L), Bcl-2 and Bcl-W, thereby affecting the level of heterodimerization of these proteins with BAX. Can reverse the death repressor activity of Bcl-X(L), but not that of Bcl-2. Appears to act as a link between growth factor receptor signaling and the apoptotic pathways. The polypeptide is Bcl2-associated agonist of cell death (BAD) (Homo sapiens (Human)).